The chain runs to 100 residues: Small ribosomal subunit protein uS14c (100 aa).

Belongs to the universal ribosomal protein uS14 family. As to quaternary structure, part of the 30S ribosomal subunit.

It localises to the plastid. It is found in the chloroplast. Binds 16S rRNA, required for the assembly of 30S particles. The polypeptide is Small ribosomal subunit protein uS14c (Fagopyrum esculentum subsp. ancestrale (Wild buckwheat)).